A 446-amino-acid chain; its full sequence is N-succinylarginine dihydrolase (446 aa).

Substrate contacts are provided by residues 19–28, Asn110, and 137–138; these read AGLSFGNVAS and HR. Residue Glu174 is part of the active site. A substrate-binding site is contributed by Arg213. His249 is an active-site residue. Residues Asp251 and Asn364 each contribute to the substrate site. Cys370 functions as the Nucleophile in the catalytic mechanism.

The protein belongs to the succinylarginine dihydrolase family. As to quaternary structure, homodimer.

The catalysed reaction is N(2)-succinyl-L-arginine + 2 H2O + 2 H(+) = N(2)-succinyl-L-ornithine + 2 NH4(+) + CO2. It functions in the pathway amino-acid degradation; L-arginine degradation via AST pathway; L-glutamate and succinate from L-arginine: step 2/5. Its function is as follows. Catalyzes the hydrolysis of N(2)-succinylarginine into N(2)-succinylornithine, ammonia and CO(2). The chain is N-succinylarginine dihydrolase from Burkholderia cenocepacia (strain HI2424).